Here is a 329-residue protein sequence, read N- to C-terminus: Glycerol-3-phosphate dehydrogenase [NAD(P)+] (329 aa).

NADPH-binding residues include Y14, R34, and K108. Positions 108, 137, and 139 each coordinate sn-glycerol 3-phosphate. A141 lines the NADPH pocket. Residues K192, D245, S255, R256, and N257 each coordinate sn-glycerol 3-phosphate. Residue K192 is the Proton acceptor of the active site. R256 provides a ligand contact to NADPH. NADPH contacts are provided by I280 and E282.

This sequence belongs to the NAD-dependent glycerol-3-phosphate dehydrogenase family.

Its subcellular location is the cytoplasm. It catalyses the reaction sn-glycerol 3-phosphate + NAD(+) = dihydroxyacetone phosphate + NADH + H(+). The enzyme catalyses sn-glycerol 3-phosphate + NADP(+) = dihydroxyacetone phosphate + NADPH + H(+). It functions in the pathway membrane lipid metabolism; glycerophospholipid metabolism. Catalyzes the reduction of the glycolytic intermediate dihydroxyacetone phosphate (DHAP) to sn-glycerol 3-phosphate (G3P), the key precursor for phospholipid synthesis. This is Glycerol-3-phosphate dehydrogenase [NAD(P)+] from Wigglesworthia glossinidia brevipalpis.